The chain runs to 276 residues: Secretagogin (276 aa).

EF-hand domains lie at 12–47 (LDAA…MLTK), 71–93 (DVSK…EDEN), 105–140 (DSSV…LFLH), 149–184 (KLEE…QENF), 197–232 (ERKR…MMEL), and 240–276 (VDLD…KINP). The Ca(2+) site is built by aspartate 71, serine 73, aspartate 75, cysteine 77, glutamate 82, aspartate 118, aspartate 120, serine 122, glutamate 129, aspartate 162, asparagine 164, aspartate 166, arginine 168, aspartate 173, aspartate 210, serine 212, threonine 214, glutamate 221, aspartate 254, asparagine 256, aspartate 258, lysine 260, and glutamate 265.

The protein resides in the cytoplasm. Its subcellular location is the secreted. It is found in the cytoplasmic vesicle. The protein localises to the secretory vesicle membrane. The chain is Secretagogin (SCGN) from Bos taurus (Bovine).